The following is a 500-amino-acid chain: Probable cytosol aminopeptidase (500 aa).

The Mn(2+) site is built by Lys-261 and Asp-266. Lys-273 is a catalytic residue. Residues Asp-284, Asp-343, and Glu-345 each contribute to the Mn(2+) site. Arg-347 is an active-site residue.

The protein belongs to the peptidase M17 family. Mn(2+) is required as a cofactor.

The protein localises to the cytoplasm. The catalysed reaction is Release of an N-terminal amino acid, Xaa-|-Yaa-, in which Xaa is preferably Leu, but may be other amino acids including Pro although not Arg or Lys, and Yaa may be Pro. Amino acid amides and methyl esters are also readily hydrolyzed, but rates on arylamides are exceedingly low.. It carries out the reaction Release of an N-terminal amino acid, preferentially leucine, but not glutamic or aspartic acids.. Presumably involved in the processing and regular turnover of intracellular proteins. Catalyzes the removal of unsubstituted N-terminal amino acids from various peptides. The protein is Probable cytosol aminopeptidase (pepA) of Bacillus subtilis (strain 168).